Reading from the N-terminus, the 482-residue chain is D-inositol 3-phosphate glycosyltransferase (482 aa).

Position 63 (histidine 63) interacts with 1D-myo-inositol 3-phosphate. UDP-N-acetyl-alpha-D-glucosamine-binding positions include 69 to 70 (QP) and glycine 77. 1D-myo-inositol 3-phosphate contacts are provided by residues 74–79 (DAGGMN), lysine 132, tyrosine 165, threonine 189, and arginine 209. 3 residues coordinate UDP-N-acetyl-alpha-D-glucosamine: arginine 289, lysine 294, and glutamine 355. Mg(2+) is bound by residues tyrosine 364, arginine 365, and alanine 367. Residues glutamate 377 and glutamate 385 each coordinate UDP-N-acetyl-alpha-D-glucosamine. Threonine 391 lines the Mg(2+) pocket.

The protein belongs to the glycosyltransferase group 1 family. MshA subfamily. Homodimer.

It carries out the reaction 1D-myo-inositol 3-phosphate + UDP-N-acetyl-alpha-D-glucosamine = 1D-myo-inositol 2-acetamido-2-deoxy-alpha-D-glucopyranoside 3-phosphate + UDP + H(+). In terms of biological role, catalyzes the transfer of a N-acetyl-glucosamine moiety to 1D-myo-inositol 3-phosphate to produce 1D-myo-inositol 2-acetamido-2-deoxy-glucopyranoside 3-phosphate in the mycothiol biosynthesis pathway. The sequence is that of D-inositol 3-phosphate glycosyltransferase from Salinispora tropica (strain ATCC BAA-916 / DSM 44818 / JCM 13857 / NBRC 105044 / CNB-440).